Here is a 5571-residue protein sequence, read N- to C-terminus: Polyketide synthase GfsB (5571 aa).

A disordered region spans residues 1-27 (MSVPPPGATPSRTSRTKGLKDRPRMEN). Positions 18-27 (GLKDRPRMEN) are enriched in basic and acidic residues. The 427-residue stretch at 57–483 (QEPVAIIGMS…GTNAHVIIEQ (427 aa)) folds into the Ketosynthase family 3 (KS3) 1 domain. Module stretches follow at residues 57–2148 (QEPV…RDTL), 2167–3728 (DEPL…GSQV), and 3746–5485 (DEPV…HTHL). Residues Cys-230, His-365, and His-405 each act as for beta-ketoacyl synthase 1 activity in the active site. A disordered region spans residues 485-518 (PAIEGTGLGDDAPPTAEHPEERTPADGGPAPQPV). The region spanning 611–926 (FVFPGQGSQW…LRSLAEAYAH (316 aa)) is the Malonyl-CoA:ACP transacylase (MAT) 1 domain. Residues 976–1109 (HPLLAAATSL…GYLAVGAHEP (134 aa)) are N-terminal hotdog fold 1. The 289-residue stretch at 976–1264 (HPLLAAATSL…LRPLATNQAP (289 aa)) folds into the PKS/mFAS DH 1 domain. The active-site Proton acceptor; for dehydratase activity 1 is His-1008. Residues 1122-1264 (ATPLDVTDLY…LRPLATNQAP (143 aa)) form a C-terminal hotdog fold 1 region. The active-site Proton donor; for dehydratase activity 1 is Asp-1183. The Enoyl reductase (ER) domain occupies 1478–1777 (GTLDHLTLIP…QARHIGKIVL (300 aa)). A Ketoreductase (KR) 1 domain is found at 1787–1966 (GTVLVTGATG…TSLAWGLWEE (180 aa)). The 76-residue stretch at 2073 to 2148 (RIVNDLVRDH…ELAAHLRDTL (76 aa)) folds into the Carrier 1 domain. Ser-2108 bears the O-(pantetheine 4'-phosphoryl)serine mark. Residues 2167–2593 (DEPLAVVAMS…GTNAHVILEQ (427 aa)) enclose the Ketosynthase family 3 (KS3) 2 domain. Catalysis depends on for beta-ketoacyl synthase 2 activity residues Cys-2340, His-2475, and His-2515. The 307-residue stretch at 2710–3016 (VFSGQGSQRP…AAVALQRGNR (307 aa)) folds into the Malonyl-CoA:ACP transacylase (MAT) 2 domain. The region spanning 3373-3551 (GTVLVTGGTG…VSVAWGPWAE (179 aa)) is the Ketoreductase (KR) 2 domain. One can recognise a Carrier 2 domain in the interval 3653–3728 (TALLDLVRGQ…ALAEYVGSQV (76 aa)). An O-(pantetheine 4'-phosphoryl)serine modification is found at Ser-3688. Residues 3746–4172 (DEPVAIIGMS…GTNAHVILEQ (427 aa)) form the Ketosynthase family 3 (KS3) 3 domain. Active-site for beta-ketoacyl synthase 3 activity residues include Cys-3919, His-4054, and His-4094. The 323-residue stretch at 4279 to 4601 (FLFSGQGSQR…ATAHVNGVQP (323 aa)) folds into the Malonyl-CoA:ACP transacylase (MAT) 3 domain. An N-terminal hotdog fold 2 region spans residues 4649–4774 (HPLLAGVVDL…GALTVAEAVD (126 aa)). The PKS/mFAS DH 2 domain occupies 4649–4931 (HPLLAGVVDL…TRPIAAGQLA (283 aa)). His-4681 acts as the Proton acceptor; for dehydratase activity 2 in catalysis. The tract at residues 4787–4931 (AIEVELDDPY…TRPIAAGQLA (145 aa)) is C-terminal hotdog fold 2. Asp-4848 serves as the catalytic Proton donor; for dehydratase activity 2. The region spanning 5134-5306 (LLVTGASGVL…TSLSWGLWAE (173 aa)) is the Ketoreductase (KR) 3 domain. The region spanning 5410–5485 (RMVLDLVRDR…ALARYLHTHL (76 aa)) is the Carrier 3 domain. Ser-5445 bears the O-(pantetheine 4'-phosphoryl)serine mark.

The cofactor is pantetheine 4'-phosphate.

It functions in the pathway antibiotic biosynthesis. Its function is as follows. Second protein in the synthesis of the 16-membered macrolide antibiotics FD-891 and FD-892. Composed of 3 modules. Modifies the product of GfsA by multiple rounds of addition of malonyl-CoA or methylmalonyl-CoA and other modifications to help generate the final products. This is Polyketide synthase GfsB from Streptomyces halstedii.